Reading from the N-terminus, the 350-residue chain is Protein XRP2 (350 aa).

The segment covering 1–10 (MGCFFSKRRK) has biased composition (basic residues). Positions 1 to 31 (MGCFFSKRRKADKESRPENEEERPKQYSWDQ) are disordered. G2 is lipidated: N-myristoyl glycine. C3 is lipidated: S-palmitoyl cysteine. The segment covering 11 to 31 (ADKESRPENEEERPKQYSWDQ) has biased composition (basic and acidic residues). One can recognise a C-CAP/cofactor C-like domain in the interval 24–179 (PKQYSWDQRE…TWSNIHDFTP (156 aa)). GTP-binding positions include 98–99 (GS) and 115–118 (QQFR).

This sequence belongs to the TBCC family. Found in a complex with ARL3, RP2 and UNC119 (or UNC119B); RP2 induces hydrolysis of GTP ARL3 in the complex, leading to the release of UNC119 (or UNC119B). Interacts with ARL3; interaction is direct and stimulated with the activated GTP-bound form of ARL3. Myristoylated on Gly-2; which may be required for membrane targeting. Post-translationally, palmitoylated on Cys-3; which may be required for plasma membrane targeting. Mutation of Cys-3 targets the protein to internal membranes. Ubiquitous. Expressed in the rod and cone photoreceptors, extending from the tips of the outer segment (OS) through the inner segment (IS) and outer nuclear layer (ONL) and into the synaptic terminals of the outer plexiform layer (ONL). Also detected in the bipolar, horizontal and amacrine cells in the inner nuclear layer (INL), extending to the inner plexiform layer (IPL) and though the ganglion cell layer (GCL) and into the nerve fiber layer (NFL) (at protein level).

It localises to the cell membrane. It is found in the cell projection. The protein localises to the cilium. Acts as a GTPase-activating protein (GAP) involved in trafficking between the Golgi and the ciliary membrane. Involved in localization of proteins, such as NPHP3, to the cilium membrane by inducing hydrolysis of GTP ARL3, leading to the release of UNC119 (or UNC119B). Acts as a GTPase-activating protein (GAP) for tubulin in concert with tubulin-specific chaperone C, but does not enhance tubulin heterodimerization. Acts as a guanine nucleotide dissociation inhibitor towards ADP-ribosylation factor-like proteins. The protein is Protein XRP2 (RP2) of Homo sapiens (Human).